Here is a 296-residue protein sequence, read N- to C-terminus: NADH-cytochrome b5 reductase 2-A (296 aa).

Residues 15-35 (FVIGAPTIALCSYYYSSGAFL) form a helical membrane-spanning segment. Positions 47–151 (NNWIDLPISR…KGPIPKWKWV (105 aa)) constitute an FAD-binding FR-type domain. 154–189 (SFESITLIGGGTGITPLYQLIHAITKNPNDKTKIRL) lines the FAD pocket.

This sequence belongs to the flavoprotein pyridine nucleotide cytochrome reductase family. FAD serves as cofactor.

Its subcellular location is the mitochondrion outer membrane. It catalyses the reaction 2 Fe(III)-[cytochrome b5] + NADH = 2 Fe(II)-[cytochrome b5] + NAD(+) + H(+). In terms of biological role, may mediate the reduction of outer membrane cytochrome b5. The chain is NADH-cytochrome b5 reductase 2-A (MCR1A) from Vanderwaltozyma polyspora (strain ATCC 22028 / DSM 70294 / BCRC 21397 / CBS 2163 / NBRC 10782 / NRRL Y-8283 / UCD 57-17) (Kluyveromyces polysporus).